Here is a 264-residue protein sequence, read N- to C-terminus: Large ribosomal subunit protein uL2 (264 aa).

This sequence belongs to the universal ribosomal protein uL2 family.

It is found in the cytoplasm. The polypeptide is Large ribosomal subunit protein uL2 (RPL8) (Tetrahymena thermophila (strain SB210)).